The following is a 154-amino-acid chain: 3-hydroxyacyl-[acyl-carrier-protein] dehydratase FabZ (154 aa).

Histidine 54 is an active-site residue.

The protein belongs to the thioester dehydratase family. FabZ subfamily.

Its subcellular location is the cytoplasm. It carries out the reaction a (3R)-hydroxyacyl-[ACP] = a (2E)-enoyl-[ACP] + H2O. Involved in unsaturated fatty acids biosynthesis. Catalyzes the dehydration of short chain beta-hydroxyacyl-ACPs and long chain saturated and unsaturated beta-hydroxyacyl-ACPs. This is 3-hydroxyacyl-[acyl-carrier-protein] dehydratase FabZ from Chlamydia caviae (strain ATCC VR-813 / DSM 19441 / 03DC25 / GPIC) (Chlamydophila caviae).